We begin with the raw amino-acid sequence, 485 residues long: E-selectin (485 aa).

Positions 1-22 are cleaved as a signal peptide; it reads MIVSQYLSALTFVLLLFKESRT. Residues 23 to 140 form the C-type lectin domain; it reads WSYHASTEMM…CTKQKLALCY (118 aa). Over 23–430 the chain is Extracellular; the sequence is WSYHASTEMM…CEAPTVSQTP (408 aa). 15 disulfide bridges follow: C41/C139, C112/C131, C144/C155, C149/C164, C166/C175, C181/C224, C194/C206, C210/C237, C242/C286, C255/C268, C272/C299, C304/C349, C335/C362, C367/C408, and C394/C421. N61, N79, and N88 each carry an N-linked (GlcNAc...) asparagine glycan. Residues E102, N104, and E110 each contribute to the Ca(2+) site. A carbohydrate is bound by residues 102–110, 114–119, and 127–129; these read EPNNKQSDE, EIYIKR, and NDE. N127 and D128 together coordinate Ca(2+). Residues 141–176 form the EGF-like domain; the sequence is KAACNPTPCGSHGECVETINNYTCQCHPGFKGLKCE. N161 carries an N-linked (GlcNAc...) asparagine glycan. 4 Sushi domains span residues 179–239, 240–301, 302–364, and 365–423; these read VTCP…KCNV, VKCD…TCKA, VSCA…VCEV, and VRCS…TCEA. An N-linked (GlcNAc...) asparagine glycan is attached at N203. N-linked (GlcNAc...) asparagine glycosylation is present at N265. 2 N-linked (GlcNAc...) asparagine glycosylation sites follow: N312 and N316. N-linked (GlcNAc...) asparagine glycans are attached at residues N379 and N401. The helical transmembrane segment at 431–453 threads the bilayer; it reads LAVGLSTAGVSLVTIPSFLFWLL. Topologically, residues 454–485 are cytoplasmic; it reads KRLQKKAKKFSPASSCSSLKSNGCYSTPSKLI. The tract at residues 466–485 is disordered; it reads ASSCSSLKSNGCYSTPSKLI.

The protein belongs to the selectin/LECAM family. In terms of assembly, interacts with SELPLG/PSGL1 and PODXL2 through the sialyl Lewis X epitope. SELPLG sulfation appears not to be required for this interaction.

The protein resides in the cell membrane. Functionally, cell-surface glycoprotein having a role in immunoadhesion. Mediates in the adhesion of blood neutrophils in cytokine-activated endothelium through interaction with SELPLG/PSGL1. May have a role in capillary morphogenesis. The polypeptide is E-selectin (SELE) (Bos taurus (Bovine)).